Here is a 363-residue protein sequence, read N- to C-terminus: UDP-N-acetylglucosamine--N-acetylmuramyl-(pentapeptide) pyrophosphoryl-undecaprenol N-acetylglucosamine transferase (363 aa).

UDP-N-acetyl-alpha-D-glucosamine-binding positions include 10 to 12, N124, S195, and Q295; that span reads TGG.

The protein belongs to the glycosyltransferase 28 family. MurG subfamily.

The protein localises to the cell membrane. It catalyses the reaction di-trans,octa-cis-undecaprenyl diphospho-N-acetyl-alpha-D-muramoyl-L-alanyl-D-glutamyl-meso-2,6-diaminopimeloyl-D-alanyl-D-alanine + UDP-N-acetyl-alpha-D-glucosamine = di-trans,octa-cis-undecaprenyl diphospho-[N-acetyl-alpha-D-glucosaminyl-(1-&gt;4)]-N-acetyl-alpha-D-muramoyl-L-alanyl-D-glutamyl-meso-2,6-diaminopimeloyl-D-alanyl-D-alanine + UDP + H(+). The protein operates within cell wall biogenesis; peptidoglycan biosynthesis. Functionally, cell wall formation. Catalyzes the transfer of a GlcNAc subunit on undecaprenyl-pyrophosphoryl-MurNAc-pentapeptide (lipid intermediate I) to form undecaprenyl-pyrophosphoryl-MurNAc-(pentapeptide)GlcNAc (lipid intermediate II). This is UDP-N-acetylglucosamine--N-acetylmuramyl-(pentapeptide) pyrophosphoryl-undecaprenol N-acetylglucosamine transferase from Bacillus subtilis (strain 168).